The primary structure comprises 371 residues: Heterodimeric geranylgeranyl pyrophosphate synthase large subunit 1, chloroplastic (371 aa).

The transit peptide at 1–51 directs the protein to the chloroplast; sequence MASVTLGSWIVVHHHNHHHPSSILTKSRSRSCPITLTKPISFRSKRTVSSS. Ser52 carries the N-acetylserine modification. Residues Lys116, Arg119, and His148 each contribute to the isopentenyl diphosphate site. 2 residues coordinate Mg(2+): Asp155 and Asp161. Arg166 is a dimethylallyl diphosphate binding site. Isopentenyl diphosphate is bound at residue Arg167. Dimethylallyl diphosphate is bound by residues Lys256, Thr257, Gln294, Lys311, and Lys321.

This sequence belongs to the FPP/GGPP synthase family. In terms of assembly, forms homodimers. Part of a heterodimeric geranyl(geranyl)diphosphate synthase. Interacts with GGR. It depends on Mg(2+) as a cofactor. In terms of tissue distribution, expressed ubiquitously.

It is found in the plastid. The protein localises to the chloroplast. It localises to the cytoplasm. The enzyme catalyses isopentenyl diphosphate + dimethylallyl diphosphate = (2E)-geranyl diphosphate + diphosphate. The catalysed reaction is isopentenyl diphosphate + (2E)-geranyl diphosphate = (2E,6E)-farnesyl diphosphate + diphosphate. It catalyses the reaction isopentenyl diphosphate + (2E,6E)-farnesyl diphosphate = (2E,6E,10E)-geranylgeranyl diphosphate + diphosphate. It participates in isoprenoid biosynthesis; farnesyl diphosphate biosynthesis; farnesyl diphosphate from geranyl diphosphate and isopentenyl diphosphate: step 1/1. Its pathway is isoprenoid biosynthesis; geranyl diphosphate biosynthesis; geranyl diphosphate from dimethylallyl diphosphate and isopentenyl diphosphate: step 1/1. It functions in the pathway isoprenoid biosynthesis; geranylgeranyl diphosphate biosynthesis; geranylgeranyl diphosphate from farnesyl diphosphate and isopentenyl diphosphate: step 1/1. Functionally, heterodimeric geranyl(geranyl)-diphosphate (GPP) synthase large subunit. In vitro, the large subunit catalyzes mainly the trans-addition of the three molecules of IPP onto DMAPP to form geranylgeranyl pyrophosphate while the small subunit alone is inactive. Upon association of the two subunits, the product profile changes and the production of gerany-diphosphate is strongly increased. The chain is Heterodimeric geranylgeranyl pyrophosphate synthase large subunit 1, chloroplastic (GGPPS1) from Arabidopsis thaliana (Mouse-ear cress).